The following is a 329-amino-acid chain: Phenylalanine--tRNA ligase alpha subunit (329 aa).

Glu-254 serves as a coordination point for Mg(2+).

The protein belongs to the class-II aminoacyl-tRNA synthetase family. Phe-tRNA synthetase alpha subunit type 1 subfamily. Tetramer of two alpha and two beta subunits. The cofactor is Mg(2+).

Its subcellular location is the cytoplasm. It carries out the reaction tRNA(Phe) + L-phenylalanine + ATP = L-phenylalanyl-tRNA(Phe) + AMP + diphosphate + H(+). The protein is Phenylalanine--tRNA ligase alpha subunit of Mannheimia succiniciproducens (strain KCTC 0769BP / MBEL55E).